Consider the following 91-residue polypeptide: Large ribosomal subunit protein eL37B (91 aa).

Residues cysteine 19, cysteine 22, cysteine 34, and cysteine 37 each contribute to the Zn(2+) site. The segment at 19 to 37 adopts a C4-type zinc-finger fold; that stretch reads CRRCGKRSFHIQKSTCACC.

It belongs to the eukaryotic ribosomal protein eL37 family. In terms of assembly, component of the large ribosomal subunit (LSU). Mature yeast ribosomes consist of a small (40S) and a large (60S) subunit. The 40S small subunit contains 1 molecule of ribosomal RNA (18S rRNA) and at least 33 different proteins. The large 60S subunit contains 3 rRNA molecules (25S, 5.8S and 5S rRNA) and at least 46 different proteins. Requires Zn(2+) as cofactor.

It localises to the cytoplasm. Its function is as follows. Component of the ribosome, a large ribonucleoprotein complex responsible for the synthesis of proteins in the cell. The small ribosomal subunit (SSU) binds messenger RNAs (mRNAs) and translates the encoded message by selecting cognate aminoacyl-transfer RNA (tRNA) molecules. The large subunit (LSU) contains the ribosomal catalytic site termed the peptidyl transferase center (PTC), which catalyzes the formation of peptide bonds, thereby polymerizing the amino acids delivered by tRNAs into a polypeptide chain. The nascent polypeptides leave the ribosome through a tunnel in the LSU and interact with protein factors that function in enzymatic processing, targeting, and the membrane insertion of nascent chains at the exit of the ribosomal tunnel. The polypeptide is Large ribosomal subunit protein eL37B (rpl3702) (Schizosaccharomyces pombe (strain 972 / ATCC 24843) (Fission yeast)).